Reading from the N-terminus, the 310-residue chain is HPr kinase/phosphorylase (310 aa).

Active-site residues include histidine 138 and lysine 159. 153-160 provides a ligand contact to ATP; that stretch reads GKSGVGKS. Serine 160 contacts Mg(2+). The active-site Proton acceptor; for phosphorylation activity. Proton donor; for dephosphorylation activity is aspartate 177. Positions 201–210 are important for the catalytic mechanism of both phosphorylation and dephosphorylation; it reads LEIRGLGIIN. Residue glutamate 202 participates in Mg(2+) binding. Arginine 243 is a catalytic residue. The interval 264-269 is important for the catalytic mechanism of dephosphorylation; the sequence is PVRPGR.

Belongs to the HPrK/P family. In terms of assembly, homohexamer. It depends on Mg(2+) as a cofactor.

The catalysed reaction is [HPr protein]-L-serine + ATP = [HPr protein]-O-phospho-L-serine + ADP + H(+). It catalyses the reaction [HPr protein]-O-phospho-L-serine + phosphate + H(+) = [HPr protein]-L-serine + diphosphate. Functionally, catalyzes the ATP- as well as the pyrophosphate-dependent phosphorylation of a specific serine residue in HPr, a phosphocarrier protein of the phosphoenolpyruvate-dependent sugar phosphotransferase system (PTS). HprK/P also catalyzes the pyrophosphate-producing, inorganic phosphate-dependent dephosphorylation (phosphorolysis) of seryl-phosphorylated HPr (P-Ser-HPr). The two antagonistic activities of HprK/P are regulated by several intracellular metabolites, which change their concentration in response to the absence or presence of rapidly metabolisable carbon sources (glucose, fructose, etc.) in the growth medium. Also phosphorylates/dephosphorylates the HPr-like catabolite repression protein crh on a specific serine residue. Therefore, by controlling the phosphorylation state of HPr and crh, HPrK/P is a sensor enzyme that plays a major role in the regulation of carbon metabolism and sugar transport: it mediates carbon catabolite repression (CCR), and regulates PTS-catalyzed carbohydrate uptake and inducer exclusion. This is HPr kinase/phosphorylase from Bacillus velezensis (strain DSM 23117 / BGSC 10A6 / LMG 26770 / FZB42) (Bacillus amyloliquefaciens subsp. plantarum).